The primary structure comprises 88 residues: UPF0250 protein Sfri_0694 (88 aa).

Belongs to the UPF0250 family.

This is UPF0250 protein Sfri_0694 from Shewanella frigidimarina (strain NCIMB 400).